The primary structure comprises 126 residues: Large ribosomal subunit protein bL17 (126 aa).

This sequence belongs to the bacterial ribosomal protein bL17 family. As to quaternary structure, part of the 50S ribosomal subunit. Contacts protein L32.

In Lysinibacillus sphaericus (strain C3-41), this protein is Large ribosomal subunit protein bL17.